Reading from the N-terminus, the 83-residue chain is Short neurotoxin 1 (83 aa).

Positions 1–21 (MKTLLLTLVVVTIVCLDLGYT) are cleaved as a signal peptide. Intrachain disulfides connect Cys24/Cys45, Cys38/Cys62, Cys64/Cys75, and Cys76/Cys81.

Belongs to the three-finger toxin family. Short-chain subfamily. Type I alpha-neurotoxin sub-subfamily. As to expression, expressed by the venom gland.

It is found in the secreted. Functionally, binds to muscle nicotinic acetylcholine receptor (nAChR) and inhibit acetylcholine from binding to the receptor, thereby impairing neuromuscular transmission. This is Short neurotoxin 1 from Oxyuranus scutellatus scutellatus (Australian taipan).